Here is a 513-residue protein sequence, read N- to C-terminus: 2-isopropylmalate synthase (513 aa).

Residues 5–268 (LIIFDTTLRD…DVGIDTTQIV (264 aa)) form the Pyruvate carboxyltransferase domain. Asp-14, His-202, His-204, and Asn-239 together coordinate Mn(2+). The interval 394–513 (RFISLSQRSE…KAVQKINPQI (120 aa)) is regulatory domain.

It belongs to the alpha-IPM synthase/homocitrate synthase family. LeuA type 1 subfamily. As to quaternary structure, homodimer. Requires Mn(2+) as cofactor.

Its subcellular location is the cytoplasm. It carries out the reaction 3-methyl-2-oxobutanoate + acetyl-CoA + H2O = (2S)-2-isopropylmalate + CoA + H(+). Its pathway is amino-acid biosynthesis; L-leucine biosynthesis; L-leucine from 3-methyl-2-oxobutanoate: step 1/4. Its function is as follows. Catalyzes the condensation of the acetyl group of acetyl-CoA with 3-methyl-2-oxobutanoate (2-ketoisovalerate) to form 3-carboxy-3-hydroxy-4-methylpentanoate (2-isopropylmalate). The chain is 2-isopropylmalate synthase from Cupriavidus metallidurans (strain ATCC 43123 / DSM 2839 / NBRC 102507 / CH34) (Ralstonia metallidurans).